The sequence spans 275 residues: Adenosylcobinamide-GDP ribazoletransferase (275 aa).

6 consecutive transmembrane segments (helical) span residues 53–73, 113–133, 144–164, 204–224, 225–245, and 253–273; these read WFVFLLFQFLFGPTIAFTISL, VGSFGAAGISLLLLLKVLGVS, LPFTFGSSAQIHLLSVWLYFV, FACIFGVTPFLALVYLHPYFL, LSLLCIIPSFVYMFSLMKRWI, and LGAVQQVVETCIWISGVFVWI.

The protein belongs to the CobS family. The cofactor is Mg(2+).

The protein localises to the cell inner membrane. The enzyme catalyses alpha-ribazole + adenosylcob(III)inamide-GDP = adenosylcob(III)alamin + GMP + H(+). It catalyses the reaction alpha-ribazole 5'-phosphate + adenosylcob(III)inamide-GDP = adenosylcob(III)alamin 5'-phosphate + GMP + H(+). The protein operates within cofactor biosynthesis; adenosylcobalamin biosynthesis; adenosylcobalamin from cob(II)yrinate a,c-diamide: step 7/7. Its function is as follows. Joins adenosylcobinamide-GDP and alpha-ribazole to generate adenosylcobalamin (Ado-cobalamin). Also synthesizes adenosylcobalamin 5'-phosphate from adenosylcobinamide-GDP and alpha-ribazole 5'-phosphate. The sequence is that of Adenosylcobinamide-GDP ribazoletransferase from Leptospira biflexa serovar Patoc (strain Patoc 1 / Ames).